Reading from the N-terminus, the 252-residue chain is Major prion protein (252 aa).

The N-terminal stretch at 1–22 (MANLGCWMLFLFVATWSDLGLC) is a signal peptide. The segment at 23–38 (KKRPKPGGWNTGGSRY) is interaction with ADGRG6. The interval 23–229 (KKRPKPGGWN…ESQAYYQRGS (207 aa)) is interaction with GRB2, ERI3 and SYN1. Residues 26–106 (PKPGGWNTGG…QWNKPSKPKT (81 aa)) form a disordered region. 5 repeat units span residues 51–58 (PQGGGWGQ), 59–66 (PHGGGWGQ), 67–74 (PHGGGWGQ), 75–82 (PHGGGWGQ), and 83–90 (PHGGGWGQ). Residues 51-90 (PQGGGWGQPHGGGWGQPHGGGWGQPHGGGWGQPHGGGWGQ) are 5 X 8 AA tandem repeats of P-H-G-G-G-W-G-Q. A compositionally biased stretch (gly residues) spans 52–94 (QGGGWGQPHGGGWGQPHGGGWGQPHGGGWGQPHGGGWGQGGGT). Positions 60, 61, 62, 68, 69, 70, 76, 77, 78, 84, 85, and 86 each coordinate Cu(2+). Residues cysteine 178 and cysteine 213 are joined by a disulfide bond. N-linked (GlcNAc...) asparagine glycosylation is found at asparagine 180 and asparagine 196. Serine 229 is lipidated: GPI-anchor amidated serine. Residues 230 to 252 (SMVLFSSPPVILLISFLIFLIVG) constitute a propeptide, removed in mature form.

It belongs to the prion family. As to quaternary structure, monomer and homodimer. Has a tendency to aggregate into amyloid fibrils containing a cross-beta spine, formed by a steric zipper of superposed beta-strands. Soluble oligomers may represent an intermediate stage on the path to fibril formation. Copper binding may promote oligomerization. Interacts with GRB2, APP, ERI3/PRNPIP and SYN1. Mislocalized cytosolically exposed PrP interacts with MGRN1; this interaction alters MGRN1 subcellular location and causes lysosomal enlargement. Interacts with APP. Interacts with KIAA1191. Interacts with ADGRG6.

It is found in the cell membrane. It localises to the golgi apparatus. Its primary physiological function is unclear. May play a role in neuronal development and synaptic plasticity. May be required for neuronal myelin sheath maintenance. May promote myelin homeostasis through acting as an agonist for ADGRG6 receptor. May play a role in iron uptake and iron homeostasis. Soluble oligomers are toxic to cultured neuroblastoma cells and induce apoptosis (in vitro). Association with GPC1 (via its heparan sulfate chains) targets PRNP to lipid rafts. Also provides Cu(2+) or Zn(2+) for the ascorbate-mediated GPC1 deaminase degradation of its heparan sulfate side chains. This is Major prion protein (PRNP) from Callithrix jacchus (White-tufted-ear marmoset).